A 318-amino-acid polypeptide reads, in one-letter code: Methionyl-tRNA formyltransferase (318 aa).

Residue 112–115 participates in (6S)-5,6,7,8-tetrahydrofolate binding; it reads SILP.

Belongs to the Fmt family.

The enzyme catalyses L-methionyl-tRNA(fMet) + (6R)-10-formyltetrahydrofolate = N-formyl-L-methionyl-tRNA(fMet) + (6S)-5,6,7,8-tetrahydrofolate + H(+). Functionally, attaches a formyl group to the free amino group of methionyl-tRNA(fMet). The formyl group appears to play a dual role in the initiator identity of N-formylmethionyl-tRNA by promoting its recognition by IF2 and preventing the misappropriation of this tRNA by the elongation apparatus. The chain is Methionyl-tRNA formyltransferase from Shewanella baltica (strain OS155 / ATCC BAA-1091).